A 634-amino-acid chain; its full sequence is MVRLVLPNPGLDARIPSLAELETIEQEEASSRPKWDNKAQYMLTCLGFCVGLGNVWRFPYLCQSHGGGAFMIPFLILLVLEGIPLLYLEFAIGQRLRRGSLGVWSSIHPALKGLGLASMLTSFMVGLYYNTIISWIMWYLFNSFQEPLPWSDCPLNENQTGYVDECARSSPVDYFWYRETLNISTSISDSGSIQWWMLLCLACAWSVLYMCTIRGIETTGKAVYITSTLPYVVLTIFLIRGLTLKGATNGIVFLFTPNVTELAQPDTWLDAGAQVFFSFSLAFGGLISFSSYNSVHNNCEKDSVIVSIINGFTSVYVAIVVYSVIGFRATQRYDDCFSTNILTLINGFDLPEGNVTQENFVDMQQRCNASDPAAYAQLVFQTCDINAFLSEAVEGTGLAFIVFTEAITKMPLSPLWSVLFFIMLFCLGLSSMFGNMEGVVVPLQDLRVIPPKWPKEVLTGLICLGTFLIGFIFTLNSGQYWLSLLDSYAGSIPLLIIAFCEMFSVVYVYGVDRFNKDIEFMIGHKPNIFWQVTWRVVSPLLMLIIFLFFFVVEVSQELTYSIWDPGYEEFPKSQKISYPNWVYVVVVIVAGVPSLTIPGYAIYKLIRNHCQKPGDHQGLVSTLSTASMNGDLKY.

The Cytoplasmic segment spans residues 1 to 41; the sequence is MVRLVLPNPGLDARIPSLAELETIEQEEASSRPKWDNKAQY. The residue at position 17 (S17) is a Phosphoserine. A helical membrane pass occupies residues 42 to 62; it reads MLTCLGFCVGLGNVWRFPYLC. The Extracellular segment spans residues 63–67; it reads QSHGG. The chain crosses the membrane as a helical span at residues 68–88; sequence GAFMIPFLILLVLEGIPLLYL. Residues 89 to 120 are Cytoplasmic-facing; sequence EFAIGQRLRRGSLGVWSSIHPALKGLGLASML. The helical transmembrane segment at 121–141 threads the bilayer; it reads TSFMVGLYYNTIISWIMWYLF. The Extracellular segment spans residues 142-192; it reads NSFQEPLPWSDCPLNENQTGYVDECARSSPVDYFWYRETLNISTSISDSGS. N-linked (GlcNAc...) asparagine glycans are attached at residues N158 and N182. Residues 193-213 form a helical membrane-spanning segment; that stretch reads IQWWMLLCLACAWSVLYMCTI. Residues 214-221 are Cytoplasmic-facing; it reads RGIETTGK. The helical transmembrane segment at 222-242 threads the bilayer; sequence AVYITSTLPYVVLTIFLIRGL. The Extracellular segment spans residues 243 to 268; sequence TLKGATNGIVFLFTPNVTELAQPDTW. N258 carries an N-linked (GlcNAc...) asparagine glycan. A helical transmembrane segment spans residues 269-289; sequence LDAGAQVFFSFSLAFGGLISF. Residues 290-304 are Cytoplasmic-facing; that stretch reads SSYNSVHNNCEKDSV. A helical membrane pass occupies residues 305–325; that stretch reads IVSIINGFTSVYVAIVVYSVI. At 326–413 the chain is on the extracellular side; the sequence is GFRATQRYDD…TEAITKMPLS (88 aa). 2 N-linked (GlcNAc...) asparagine glycosylation sites follow: N354 and N368. The chain crosses the membrane as a helical span at residues 414–434; it reads PLWSVLFFIMLFCLGLSSMFG. The Cytoplasmic portion of the chain corresponds to 435–456; sequence NMEGVVVPLQDLRVIPPKWPKE. The chain crosses the membrane as a helical span at residues 457-477; sequence VLTGLICLGTFLIGFIFTLNS. Residues 478-490 are Extracellular-facing; sequence GQYWLSLLDSYAG. The chain crosses the membrane as a helical span at residues 491–511; that stretch reads SIPLLIIAFCEMFSVVYVYGV. Over 512–531 the chain is Cytoplasmic; that stretch reads DRFNKDIEFMIGHKPNIFWQ. Residues 532 to 552 form a helical membrane-spanning segment; that stretch reads VTWRVVSPLLMLIIFLFFFVV. Topologically, residues 553 to 581 are extracellular; it reads EVSQELTYSIWDPGYEEFPKSQKISYPNW. The helical transmembrane segment at 582–602 threads the bilayer; the sequence is VYVVVVIVAGVPSLTIPGYAI. At 603–634 the chain is on the cytoplasmic side; the sequence is YKLIRNHCQKPGDHQGLVSTLSTASMNGDLKY. S627 is modified (phosphoserine).

The protein belongs to the sodium:neurotransmitter symporter (SNF) (TC 2.A.22) family. SLC6A19 subfamily. Interacts in a tissue-specific manner with ACE2 in small intestine and with CLTRN in the kidney. Interacts with CLTRN; this interaction is required for trafficking of SLC6A19 to the plasma membrane and for its catalytic activation in kidneys. Interacts with ACE2; this interaction is required for trafficking of SLC6A19 to the plasma membrane and for its catalytic activation in intestine. Interacts with ANPEP; the interaction positively regulates its amino acid transporter activity. As to expression, robust expression in kidney and small intestine, with minimal expression in pancreas. Also expressed in stomach, liver, duodenum, ileocecum, colon and prostate. Not detected in testis, whole brain, cerebellum, fetal liver, spleen, skeletal muscle, uterus, heart or lung.

Its subcellular location is the cell membrane. The protein localises to the apical cell membrane. It catalyses the reaction L-alanine(in) + Na(+)(in) = L-alanine(out) + Na(+)(out). The catalysed reaction is L-cysteine(in) + Na(+)(in) = L-cysteine(out) + Na(+)(out). It carries out the reaction L-glutamine(in) + Na(+)(in) = L-glutamine(out) + Na(+)(out). The enzyme catalyses glycine(in) + Na(+)(in) = glycine(out) + Na(+)(out). It catalyses the reaction L-isoleucine(in) + Na(+)(in) = L-isoleucine(out) + Na(+)(out). The catalysed reaction is L-leucine(in) + Na(+)(in) = L-leucine(out) + Na(+)(out). It carries out the reaction L-methionine(in) + Na(+)(in) = L-methionine(out) + Na(+)(out). The enzyme catalyses L-phenylalanine(in) + Na(+)(in) = L-phenylalanine(out) + Na(+)(out). It catalyses the reaction L-serine(in) + Na(+)(in) = L-serine(out) + Na(+)(out). The catalysed reaction is L-tryptophan(in) + Na(+)(in) = L-tryptophan(out) + Na(+)(out). It carries out the reaction L-tyrosine(in) + Na(+)(in) = L-tyrosine(out) + Na(+)(out). The enzyme catalyses L-valine(in) + Na(+)(in) = L-valine(out) + Na(+)(out). Its function is as follows. Transporter that mediates resorption of neutral amino acids across the apical membrane of renal and intestinal epithelial cells. This uptake is sodium-dependent and chloride-independent. Requires CLTRN in kidney or ACE2 in intestine for cell surface expression and amino acid transporter activity. This chain is Sodium-dependent neutral amino acid transporter B(0)AT1 (SLC6A19), found in Homo sapiens (Human).